The chain runs to 375 residues: DNA replication and repair protein RecF (375 aa).

30–37 (GDNAQGKS) contacts ATP.

The protein belongs to the RecF family.

The protein localises to the cytoplasm. The RecF protein is involved in DNA metabolism; it is required for DNA replication and normal SOS inducibility. RecF binds preferentially to single-stranded, linear DNA. It also seems to bind ATP. The protein is DNA replication and repair protein RecF of Gloeobacter violaceus (strain ATCC 29082 / PCC 7421).